The chain runs to 451 residues: Bifunctional protein GlmU (451 aa).

A pyrophosphorylase region spans residues 1 to 229 (MQRNAVILAA…FNEIMGVNDR (229 aa)). Residues 8 to 11 (LAAG), Lys22, Gln72, and 77 to 78 (GT) contribute to the UDP-N-acetyl-alpha-D-glucosamine site. Asp102 serves as a coordination point for Mg(2+). Residues Gly139, Glu154, and Asn227 each coordinate UDP-N-acetyl-alpha-D-glucosamine. Asn227 lines the Mg(2+) pocket. A linker region spans residues 230–250 (VMLSNAEKALQQRINIEHMRN). Residues 251–451 (GVTIIDPTTT…QITKEGYLKK (201 aa)) are N-acetyltransferase. UDP-N-acetyl-alpha-D-glucosamine-binding residues include Arg332 and Lys350. The active-site Proton acceptor is His362. Residues Tyr365 and Asn376 each contribute to the UDP-N-acetyl-alpha-D-glucosamine site. Acetyl-CoA-binding positions include 385-386 (NY), Ala422, and Arg439.

The protein in the N-terminal section; belongs to the N-acetylglucosamine-1-phosphate uridyltransferase family. It in the C-terminal section; belongs to the transferase hexapeptide repeat family. As to quaternary structure, homotrimer. Mg(2+) serves as cofactor.

The protein resides in the cytoplasm. The catalysed reaction is alpha-D-glucosamine 1-phosphate + acetyl-CoA = N-acetyl-alpha-D-glucosamine 1-phosphate + CoA + H(+). The enzyme catalyses N-acetyl-alpha-D-glucosamine 1-phosphate + UTP + H(+) = UDP-N-acetyl-alpha-D-glucosamine + diphosphate. The protein operates within nucleotide-sugar biosynthesis; UDP-N-acetyl-alpha-D-glucosamine biosynthesis; N-acetyl-alpha-D-glucosamine 1-phosphate from alpha-D-glucosamine 6-phosphate (route II): step 2/2. It participates in nucleotide-sugar biosynthesis; UDP-N-acetyl-alpha-D-glucosamine biosynthesis; UDP-N-acetyl-alpha-D-glucosamine from N-acetyl-alpha-D-glucosamine 1-phosphate: step 1/1. It functions in the pathway bacterial outer membrane biogenesis; LPS lipid A biosynthesis. Its function is as follows. Catalyzes the last two sequential reactions in the de novo biosynthetic pathway for UDP-N-acetylglucosamine (UDP-GlcNAc). The C-terminal domain catalyzes the transfer of acetyl group from acetyl coenzyme A to glucosamine-1-phosphate (GlcN-1-P) to produce N-acetylglucosamine-1-phosphate (GlcNAc-1-P), which is converted into UDP-GlcNAc by the transfer of uridine 5-monophosphate (from uridine 5-triphosphate), a reaction catalyzed by the N-terminal domain. This Staphylococcus haemolyticus (strain JCSC1435) protein is Bifunctional protein GlmU.